Consider the following 400-residue polypeptide: Serine/threonine transporter SstT (400 aa).

The next 9 helical transmembrane spans lie at 14-34 (IIIAIILGIGVALLFPTVTPY), 48-68 (SVAPILVFVLVLSSIANFQVG), 76-96 (VLLLYVVGMLLAAFSAVIASL), 136-156 (AISEANFIGILAWAIGLGLAM), 177-197 (IIHKVIAFAPVGIFGLVAVTF), 211-231 (LLAVLLGTMLFVALVINPILV), 285-305 (IPLGATVNMAGAAVTITVLTL), 311-331 (LGIHVDLATMIILSVVATISA), and 349-371 (CSLFGISSEIAMQVVAVGMIISV).

This sequence belongs to the dicarboxylate/amino acid:cation symporter (DAACS) (TC 2.A.23) family.

The protein localises to the cell inner membrane. It catalyses the reaction L-serine(in) + Na(+)(in) = L-serine(out) + Na(+)(out). It carries out the reaction L-threonine(in) + Na(+)(in) = L-threonine(out) + Na(+)(out). Its function is as follows. Involved in the import of serine and threonine into the cell, with the concomitant import of sodium (symport system). In Acinetobacter baumannii (strain ATCC 17978 / DSM 105126 / CIP 53.77 / LMG 1025 / NCDC KC755 / 5377), this protein is Serine/threonine transporter SstT.